A 135-amino-acid polypeptide reads, in one-letter code: ATP synthase epsilon chain (135 aa).

Belongs to the ATPase epsilon chain family. As to quaternary structure, F-type ATPases have 2 components, CF(1) - the catalytic core - and CF(0) - the membrane proton channel. CF(1) has five subunits: alpha(3), beta(3), gamma(1), delta(1), epsilon(1). CF(0) has three main subunits: a, b and c.

It localises to the cell inner membrane. Functionally, produces ATP from ADP in the presence of a proton gradient across the membrane. The protein is ATP synthase epsilon chain of Granulibacter bethesdensis (strain ATCC BAA-1260 / CGDNIH1).